A 310-amino-acid polypeptide reads, in one-letter code: Mitochondrial thiamine pyrophosphate carrier 1 (310 aa).

A run of 6 helical transmembrane segments spans residues 16-32 (VSPYESLFAGSVSGGVA), 88-104 (ILYVMYGAVQFTTYSAL), 117-141 (IVMPSSVHSLLAGVGAGIASTLTTY), 173-197 (GISGLFAGIRPAMISVASTTGLMFW), 218-234 (ICGFVAGATSKGITFPL), and 274-291 (GYGVSILKTAPTSAISLW). Solcar repeat units lie at residues 16 to 107 (VSPY…LSKS), 120 to 205 (PSSV…AREF), and 211 to 299 (HVPF…VISA).

It belongs to the mitochondrial carrier (TC 2.A.29) family.

Its subcellular location is the mitochondrion inner membrane. In terms of biological role, mitochondrial transporter that mediates uptake of thiamine pyrophosphate (ThPP) into mitochondria. The protein is Mitochondrial thiamine pyrophosphate carrier 1 (TPC1) of Lodderomyces elongisporus (strain ATCC 11503 / CBS 2605 / JCM 1781 / NBRC 1676 / NRRL YB-4239) (Yeast).